The sequence spans 419 residues: Pregnancy-specific beta-1-glycoprotein 4 (419 aa).

A signal peptide spans 1 to 34 (MGPLSAPPCTQRITWKGVLLTASLLNFWNPPTTA). The 110-residue stretch at 35–144 (QVTIEAQPPK…TGHFTFTLHL (110 aa)) folds into the Ig-like V-type domain. N-linked (GlcNAc...) asparagine glycosylation is found at asparagine 104, asparagine 111, asparagine 199, asparagine 268, asparagine 299, and asparagine 303. 3 Ig-like C2-type domains span residues 147 to 234 (PKPS…VTLN), 237 to 327 (PKLS…VTLN), and 332 to 410 (PDLP…KSIT). 3 disulfide bridges follow: cysteine 169-cysteine 217, cysteine 262-cysteine 310, and cysteine 354-cysteine 394.

This sequence belongs to the immunoglobulin superfamily. CEA family.

It is found in the secreted. This chain is Pregnancy-specific beta-1-glycoprotein 4 (PSG4), found in Homo sapiens (Human).